A 189-amino-acid chain; its full sequence is MRKIGIIGGTFDPPHYGHLLIANEVYHALNLEEVWFLPNQIPPHKQGRNITSVESRLQMLELATEEEEHFSICLEELSRKGPSYTYDTMLQLTKKHPDVQFHFIIGGDMVEYLPKWYNIEMLLNLVTFVGVARPGYTLHTPYPITTVEIPEFAVSSSLLRERYKEKKTCKYLLPEKVQVYIERNGLYES.

The protein belongs to the NadD family.

It carries out the reaction nicotinate beta-D-ribonucleotide + ATP + H(+) = deamido-NAD(+) + diphosphate. It functions in the pathway cofactor biosynthesis; NAD(+) biosynthesis; deamido-NAD(+) from nicotinate D-ribonucleotide: step 1/1. Catalyzes the reversible adenylation of nicotinate mononucleotide (NaMN) to nicotinic acid adenine dinucleotide (NaAD). The chain is Probable nicotinate-nucleotide adenylyltransferase from Bacillus cereus (strain ATCC 10987 / NRS 248).